The following is a 433-amino-acid chain: G-protein coupled receptor 22 (433 aa).

The Extracellular portion of the chain corresponds to 1–45; it reads MCFSPILEINMQSESNITVRDDIDDINTNMYQPLSYPLSFQVSLT. N-linked (GlcNAc...) asparagine glycosylation occurs at Asn-16. The chain crosses the membrane as a helical span at residues 46–66; sequence GFLMLEIVLGLGSNLTVLVLY. The Cytoplasmic segment spans residues 67 to 85; sequence CMKSNLINSVSNIITMNLH. The helical transmembrane segment at 86–106 threads the bilayer; that stretch reads VLDVIICVGCIPLTIVILLLS. Topologically, residues 107-115 are extracellular; sequence LESNTALIC. The helical transmembrane segment at 116 to 136 threads the bilayer; it reads CFHEACVSFASVSTAINVFAI. Topologically, residues 137–156 are cytoplasmic; the sequence is TLDRYDISVKPANRILTMGR. The helical transmembrane segment at 157–177 threads the bilayer; that stretch reads AVMLMISIWIFSFFSFLIPFI. Topologically, residues 178–208 are extracellular; sequence EVNFFSLQSGNTWENKTLLCVSTNEYYTELG. N-linked (GlcNAc...) asparagine glycosylation is present at Asn-192. The helical transmembrane segment at 209 to 229 threads the bilayer; it reads MYYHLLVQIPIFFFTVVVMLI. Residues 230–315 are Cytoplasmic-facing; it reads TYTKILQALN…ERQKRVFRMS (86 aa). Residues 316-336 traverse the membrane as a helical segment; the sequence is LLIISTFLLCWTPISVLNTTI. Topologically, residues 337 to 349 are extracellular; it reads LCLGPSDLLVKLR. The chain crosses the membrane as a helical span at residues 350–370; the sequence is LCFLVMAYGTTIFHPLLYAFT. Residues 371–433 lie on the Cytoplasmic side of the membrane; sequence RQKFQKVLKS…KCLVPQVVTD (63 aa).

This sequence belongs to the G-protein coupled receptor 1 family. High expression in adult and fetal heart tissue. Expressed in the brain, with enrichment in the accumbens, amygdala, cerebellum, cortex, and hippocampus regions.

It is found in the cell membrane. In terms of biological role, orphan G-protein coupled receptor. Seems to act through a G(i)/G(o) mediated pathway. May be involved in ciliogenesis. The protein is G-protein coupled receptor 22 of Homo sapiens (Human).